The primary structure comprises 389 residues: E3 ubiquitin-protein ligase E3D (389 aa).

At alanine 2 the chain carries N-acetylalanine. The short motif at 129–159 (PLPSENWGALVGEWCCHPDPFANKPLHPQEN) is the BRAT1-like motif element. Zn(2+) is bound at residue cysteine 144. Positions 235 to 257 (QSSERSFPIIPRPRFVQSVIAQC) are interaction with UBE2C. The tract at residues 353–389 (LPSATCLELLLILSKSNANLPSSLRHMNSFQVAFLKI) is HECT-like.

Interacts with UBE2C/UbcH10 (E2 ubiquitin-conjugating enzyme). In vitro, interacts with cyclin-B. In terms of processing, ubiquitinated by UBCH10 (E2 ubiquitin-conjugating enzyme).

The protein localises to the cytoplasm. It carries out the reaction S-ubiquitinyl-[E2 ubiquitin-conjugating enzyme]-L-cysteine + [acceptor protein]-L-lysine = [E2 ubiquitin-conjugating enzyme]-L-cysteine + N(6)-ubiquitinyl-[acceptor protein]-L-lysine.. It participates in protein modification; protein ubiquitination. Its function is as follows. E3 ubiquitin-protein ligase which accepts ubiquitin from specific E2 ubiquitin-conjugating enzymes, and transfers it to substrates, generally promoting their degradation by the proteasome. Independently of its E3 ubiquitin-protein ligase activity, acts as an inhibitor of CPSF3 endonuclease activity by blocking CPSF3 active site. The chain is E3 ubiquitin-protein ligase E3D (UBE3D) from Pongo abelii (Sumatran orangutan).